Reading from the N-terminus, the 390-residue chain is MMIKKVERFFKSDAAGGIVLIAAAALAMLLANLNATQELYTGFLSTPVELKFGALEIKKNMLLWVNDALMAVFFLLVGLEVKRELVQGSLASRRQASLPVIAALGGMVLPAALYLAFNFQDPITRAGWAIPAATDIAFALGILALLGSRVPPALKVFLMALAIIDDLGAIVIIALFYTSSLSMVSLMVAAGAIAVLAVLNLCNVRRVGVYILVGVVLWTAVLKSGVHATLAGVIIGFFVPLKAQKGHSPAGTLEHALHPWVGFLILPLFAFANAGVSLDGVTLAGLASLLPLGIIAGLFIGKPLGISLFCALAVKLKWATLPPGVSQKTILAVGVLCGIGFTMSIFIASLAFGDVDAALVTWAKLGILVGSLLAAVIGYALLRSHLSRAP.

The next 12 helical transmembrane spans lie at 14 to 34 (AAGG…ANLN), 61 to 81 (MLLW…GLEV), 97 to 117 (SLPV…YLAF), 126 to 146 (AGWA…LALL), 156 to 176 (VFLM…IALF), 181 to 201 (LSMV…VLNL), 221 to 241 (VLKS…FVPL), 256 to 276 (ALHP…NAGV), 280 to 300 (GVTL…GLFI), 305 to 325 (GISL…PPGV), 330 to 350 (ILAV…IASL), and 362 to 382 (WAKL…YALL).

It belongs to the NhaA Na(+)/H(+) (TC 2.A.33) antiporter family.

It is found in the cell inner membrane. It carries out the reaction Na(+)(in) + 2 H(+)(out) = Na(+)(out) + 2 H(+)(in). Na(+)/H(+) antiporter that extrudes sodium in exchange for external protons. The chain is Na(+)/H(+) antiporter NhaA from Cronobacter sakazakii (strain ATCC BAA-894) (Enterobacter sakazakii).